The sequence spans 206 residues: Large ribosomal subunit protein uL4 (206 aa).

Residues Ala-43–Ser-78 form a disordered region. Over residues His-58–Gly-70 the composition is skewed to basic residues.

Belongs to the universal ribosomal protein uL4 family. In terms of assembly, part of the 50S ribosomal subunit.

One of the primary rRNA binding proteins, this protein initially binds near the 5'-end of the 23S rRNA. It is important during the early stages of 50S assembly. It makes multiple contacts with different domains of the 23S rRNA in the assembled 50S subunit and ribosome. In terms of biological role, forms part of the polypeptide exit tunnel. The polypeptide is Large ribosomal subunit protein uL4 (Polynucleobacter necessarius subsp. necessarius (strain STIR1)).